The following is a 205-amino-acid chain: Adenylyl-sulfate kinase (205 aa).

Residue 31-38 (GLSGAGKS) participates in ATP binding. S105 acts as the Phosphoserine intermediate in catalysis.

The protein belongs to the APS kinase family.

It catalyses the reaction adenosine 5'-phosphosulfate + ATP = 3'-phosphoadenylyl sulfate + ADP + H(+). It participates in sulfur metabolism; hydrogen sulfide biosynthesis; sulfite from sulfate: step 2/3. In terms of biological role, catalyzes the synthesis of activated sulfate. In Shewanella putrefaciens (strain CN-32 / ATCC BAA-453), this protein is Adenylyl-sulfate kinase.